Reading from the N-terminus, the 44-residue chain is Photosystem I reaction center subunit IX (44 aa).

A helical transmembrane segment spans residues 7-27 (YLSVAPVLTTLWFGSLAGLLI).

This sequence belongs to the PsaJ family.

The protein localises to the plastid. Its subcellular location is the chloroplast thylakoid membrane. May help in the organization of the PsaE and PsaF subunits. This chain is Photosystem I reaction center subunit IX, found in Nymphaea alba (White water-lily).